Consider the following 571-residue polypeptide: Proline--tRNA ligase (571 aa).

The protein belongs to the class-II aminoacyl-tRNA synthetase family. ProS type 1 subfamily. As to quaternary structure, homodimer.

It localises to the cytoplasm. It carries out the reaction tRNA(Pro) + L-proline + ATP = L-prolyl-tRNA(Pro) + AMP + diphosphate. In terms of biological role, catalyzes the attachment of proline to tRNA(Pro) in a two-step reaction: proline is first activated by ATP to form Pro-AMP and then transferred to the acceptor end of tRNA(Pro). As ProRS can inadvertently accommodate and process non-cognate amino acids such as alanine and cysteine, to avoid such errors it has two additional distinct editing activities against alanine. One activity is designated as 'pretransfer' editing and involves the tRNA(Pro)-independent hydrolysis of activated Ala-AMP. The other activity is designated 'posttransfer' editing and involves deacylation of mischarged Ala-tRNA(Pro). The misacylated Cys-tRNA(Pro) is not edited by ProRS. The chain is Proline--tRNA ligase from Pseudomonas fluorescens (strain Pf0-1).